A 455-amino-acid polypeptide reads, in one-letter code: T-box protein VegT-A (455 aa).

Disordered regions lie at residues 21 to 40, 229 to 262, and 295 to 346; these read SNCA…SSQD, REQE…DSPE, and ANQG…EPSS. The T-box DNA-binding region spans 57–230; sequence LWSQFHQEGT…HNPFAKGFRE (174 aa). The segment covering 229–241 has biased composition (basic and acidic residues); it reads REQERSHKRDDVL. A compositionally biased stretch (polar residues) spans 308–324; that stretch reads GANQEQQVPTSSSNFYN.

As to quaternary structure, forms a repression complex on the promoters of the nodal/nr1 and siamois genes with the maternal factors tcf7l1/tcf3 and pouf5.1/oct-25. Interacts (via C-terminus) with tcf7l1/tcf3 (via N-terminus). Also interacts with the other POU-domain transcription factors pou5f1.2/oct-91 and pou5f1.3/oct-60. Uniformly distributed in stage I oocytes but becomes localized to the vegetal hemisphere by stage II and remains so thereafter throughout oogenesis and the early embryonic cleavage stages. Zygotic expression parallels blastopore formation and shifts from dorsal expression in the marginal zone of late blastula and early gastrula stages to a ventral/lateral expression at the posterior end of later stage embryos. Expression is excluded from the notochord. In tailbud and tadpole stages, expressed exclusively in a subset of posterior Rohon-Beard neurons.

It is found in the nucleus. In terms of biological role, transcription factor required for both mesoderm and endoderm formation in the embryo; signaling determinants and concentration levels may determine which germ layer is formed. Acts together with beta-catenin to activate genes that are responsible for mesoderm induction including wnt-8, eomes t/bra, siamois, mix1 and sox17. Directly binds to promoter DNA. Patterns the mesoderm along the dorsoventral and posterior axis. Activates siamois gene transcription when alone or in combination with beta-catenin, but inhibits siamois transcription in combination with pou5f1.1/oct-25. In Xenopus laevis (African clawed frog), this protein is T-box protein VegT-A (vegt-a).